The following is a 507-amino-acid chain: Probable D-lactate dehydrogenase, mitochondrial (507 aa).

A mitochondrion-targeting transit peptide spans 1-52 (MARLLRSATWELFPWRGYCSQKAKGELCRDFVEALKAVVGGSHVSTAAVVRE). N6-acetyllysine is present on Lys36. In terms of domain architecture, FAD-binding PCMH-type spans 62-265 (RCEPPDAVVW…TATTLRLHPA (204 aa)). An N6-acetyllysine modification is found at Lys315. At Lys358 the chain carries N6-acetyllysine; alternate. At Lys358 the chain carries N6-succinyllysine; alternate. Residues Lys445 and Lys472 each carry the N6-acetyllysine modification.

The protein belongs to the FAD-binding oxidoreductase/transferase type 4 family. In terms of assembly, interacts with CSRP3. FAD is required as a cofactor. As to expression, expressed moderately in heart and liver and at lower levels in skeletal muscle and kidney.

The protein localises to the mitochondrion. The enzyme catalyses (R)-lactate + 2 Fe(III)-[cytochrome c] = 2 Fe(II)-[cytochrome c] + pyruvate + 2 H(+). Involved in D-lactate, but not L-lactate catabolic process. The protein is Probable D-lactate dehydrogenase, mitochondrial of Homo sapiens (Human).